Consider the following 238-residue polypeptide: Lipoprotein-releasing system ATP-binding protein LolD (238 aa).

The ABC transporter domain maps to leucine 6–alanine 238. Residue glycine 42–serine 49 participates in ATP binding.

It belongs to the ABC transporter superfamily. Lipoprotein translocase (TC 3.A.1.125) family. The complex is composed of two ATP-binding proteins (LolD) and two transmembrane proteins (LolC and LolE).

It is found in the cell inner membrane. Part of the ABC transporter complex LolCDE involved in the translocation of mature outer membrane-directed lipoproteins, from the inner membrane to the periplasmic chaperone, LolA. Responsible for the formation of the LolA-lipoprotein complex in an ATP-dependent manner. The chain is Lipoprotein-releasing system ATP-binding protein LolD from Aliivibrio fischeri (strain ATCC 700601 / ES114) (Vibrio fischeri).